Consider the following 232-residue polypeptide: Large ribosomal subunit protein uL1 (232 aa).

The protein belongs to the universal ribosomal protein uL1 family. Part of the 50S ribosomal subunit.

Its function is as follows. Binds directly to 23S rRNA. The L1 stalk is quite mobile in the ribosome, and is involved in E site tRNA release. Protein L1 is also a translational repressor protein, it controls the translation of the L11 operon by binding to its mRNA. The protein is Large ribosomal subunit protein uL1 of Chlamydia pneumoniae (Chlamydophila pneumoniae).